Reading from the N-terminus, the 581-residue chain is Proteasome-associated ATPase (581 aa).

The segment at 1-28 (MTSSDLTQRKGLTMSDSTPDTPRSTPED) is disordered. The segment covering 14-24 (MSDSTPDTPRS) has biased composition (polar residues). The stretch at 27-66 (EDAARRLAVLSAQNERLAQVLGEARGKIVELQQQIEEFAK) forms a coiled coil. 248 to 253 (GCGKTL) provides a ligand contact to ATP. The tract at residues 561–581 (GSGRSAAGRTIETATSTGQYL) is disordered. A compositionally biased stretch (polar residues) spans 572-581 (ETATSTGQYL). The segment at 580–581 (YL) is docks into pockets in the proteasome alpha-ring.

It belongs to the AAA ATPase family. As to quaternary structure, homohexamer. Assembles into a hexameric ring structure that caps the 20S proteasome core. Strongly interacts with the prokaryotic ubiquitin-like protein Pup through a hydrophobic interface; the interacting region of ARC lies in its N-terminal coiled-coil domain. There is one Pup binding site per ARC hexamer ring. Upon ATP-binding, the C-terminus of ARC interacts with the alpha-rings of the proteasome core, possibly by binding to the intersubunit pockets.

It functions in the pathway protein degradation; proteasomal Pup-dependent pathway. In terms of biological role, ATPase which is responsible for recognizing, binding, unfolding and translocation of pupylated proteins into the bacterial 20S proteasome core particle. May be essential for opening the gate of the 20S proteasome via an interaction with its C-terminus, thereby allowing substrate entry and access to the site of proteolysis. Thus, the C-termini of the proteasomal ATPase may function like a 'key in a lock' to induce gate opening and therefore regulate proteolysis. This is Proteasome-associated ATPase from Sanguibacter keddieii (strain ATCC 51767 / DSM 10542 / NCFB 3025 / ST-74).